Consider the following 145-residue polypeptide: MRHRKQGRKFGRTSSHRKAMFKNMSASLINHELIKTTLPKAKELRTIVEPLVTLAKREHKLRQELDTNSNEFKAQSVALRRQAFDFLRNKAAVTKLFEEFGARYAERAGGYTRILKCGYRFGDKAPMAFIELVDRPQVEEAADEE.

This sequence belongs to the bacterial ribosomal protein bL17 family. As to quaternary structure, part of the 50S ribosomal subunit. Contacts protein L32.

The polypeptide is Large ribosomal subunit protein bL17 (Francisella tularensis subsp. holarctica (strain FTNF002-00 / FTA)).